Consider the following 365-residue polypeptide: Coxsackievirus and adenovirus receptor (365 aa).

The first 19 residues, 1-19 (MALLLCFVLLCGVVDFARS), serve as a signal peptide directing secretion. 2 Ig-like C2-type domains span residues 20-134 (LSIT…KKIH) and 141-228 (PSGA…LRLN). The Extracellular segment spans residues 20–237 (LSITTPEEMI…NVVPPSNKAG (218 aa)). 2 disulfide bridges follow: cysteine 41–cysteine 120 and cysteine 162–cysteine 212. N-linked (GlcNAc...) asparagine glycans are attached at residues asparagine 106 and asparagine 201. Residues 238-258 (LIAGAIIGTLLALALIGLIIF) traverse the membrane as a helical segment. 2 S-palmitoyl cysteine lipidation sites follow: cysteine 259 and cysteine 260. Over 259–365 (CCRKKRREEK…PAQSKDGSIV (107 aa)) the chain is Cytoplasmic. Residues 269 to 282 (YEKEVHHDIREDVP) show a composition bias toward basic and acidic residues. Residues 269-343 (YEKEVHHDIR…TLPPAKVAAP (75 aa)) form a disordered region. Positions 286–322 (SRTSTARSYIGSNHSSLGSMSPSNMEGYSKTQYNQVP) are enriched in polar residues. Phosphoserine is present on residues serine 297, serine 304, serine 306, serine 323, serine 332, and serine 363. Residues 360–365 (KDGSIV) carry the PDZ-binding motif.

Monomer. May form homodimer. Interacts with LNX, MAGI1, DLG4, PRKCABP, TJP1 and CTNNB1. Interacts with MPDZ; recruits MPDZ to intercellular contact sites. Interacts with JAML (homodimeric form). Secreted isoform 3, isoform 4 and isoform 5 can interact with the extracellular domain of the receptor. As to quaternary structure, (Microbial infection) Interacts with adenovirus subgroups A, C, D, E and F fiber proteins as well as coxsackievirus B1, B2, B3, B4, B5 and B6 capsid proteins. N-glycosylated. Post-translationally, palmitoylated on Cys-259 and/or Cys-260; required for proper localization to the plasma membrane. As to expression, expressed in pancreas, brain, heart, small intestine, testis, prostate and at a lower level in liver and lung. Isoform 5 is ubiquitously expressed. Isoform 3 is expressed in heart, lung and pancreas. In skeletal muscle, isoform 1 is found at the neuromuscular junction and isoform 2 is found in blood vessels. In cardiac muscle, isoform 1 and isoform 2 are found at intercalated disks. In heart expressed in subendothelial layers of the vessel wall but not in the luminal endothelial surface. Expression is elevated in hearts with dilated cardiomyopathy.

It localises to the cell membrane. The protein resides in the basolateral cell membrane. The protein localises to the cell junction. It is found in the tight junction. Its subcellular location is the adherens junction. It localises to the secreted. Functionally, component of the epithelial apical junction complex that may function as a homophilic cell adhesion molecule and is essential for tight junction integrity. Also involved in transepithelial migration of leukocytes through adhesive interactions with JAML a transmembrane protein of the plasma membrane of leukocytes. The interaction between both receptors also mediates the activation of gamma-delta T-cells, a subpopulation of T-cells residing in epithelia and involved in tissue homeostasis and repair. Upon epithelial CXADR-binding, JAML induces downstream cell signaling events in gamma-delta T-cells through PI3-kinase and MAP kinases. It results in proliferation and production of cytokines and growth factors by T-cells that in turn stimulate epithelial tissues repair. In terms of biological role, (Microbial infection) Acts as a receptor for adenovirus type C. (Microbial infection) Acts as a receptor for Coxsackievirus B1 to B6. This is Coxsackievirus and adenovirus receptor (CXADR) from Homo sapiens (Human).